We begin with the raw amino-acid sequence, 73 residues long: Translation initiation factor IF-1 (73 aa).

The S1-like domain maps to 1 to 73 (MSKKKDVIEM…TRGRITYRYK (73 aa)).

Belongs to the IF-1 family. As to quaternary structure, component of the 30S ribosomal translation pre-initiation complex which assembles on the 30S ribosome in the order IF-2 and IF-3, IF-1 and N-formylmethionyl-tRNA(fMet); mRNA recruitment can occur at any time during PIC assembly.

It is found in the cytoplasm. One of the essential components for the initiation of protein synthesis. Stabilizes the binding of IF-2 and IF-3 on the 30S subunit to which N-formylmethionyl-tRNA(fMet) subsequently binds. Helps modulate mRNA selection, yielding the 30S pre-initiation complex (PIC). Upon addition of the 50S ribosomal subunit IF-1, IF-2 and IF-3 are released leaving the mature 70S translation initiation complex. This chain is Translation initiation factor IF-1, found in Roseiflexus castenholzii (strain DSM 13941 / HLO8).